The sequence spans 264 residues: S-adenosylmethionine decarboxylase proenzyme (264 aa).

The active-site Schiff-base intermediate with substrate; via pyruvic acid is Ser113. Ser113 bears the Pyruvic acid (Ser); by autocatalysis mark. The active-site Proton acceptor; for processing activity is the His118. Residue Cys141 is the Proton donor; for catalytic activity of the active site.

This sequence belongs to the prokaryotic AdoMetDC family. Type 2 subfamily. As to quaternary structure, heterooctamer of four alpha and four beta chains arranged as a tetramer of alpha/beta heterodimers. Requires pyruvate as cofactor. Is synthesized initially as an inactive proenzyme. Formation of the active enzyme involves a self-maturation process in which the active site pyruvoyl group is generated from an internal serine residue via an autocatalytic post-translational modification. Two non-identical subunits are generated from the proenzyme in this reaction, and the pyruvate is formed at the N-terminus of the alpha chain, which is derived from the carboxyl end of the proenzyme. The post-translation cleavage follows an unusual pathway, termed non-hydrolytic serinolysis, in which the side chain hydroxyl group of the serine supplies its oxygen atom to form the C-terminus of the beta chain, while the remainder of the serine residue undergoes an oxidative deamination to produce ammonia and the pyruvoyl group blocking the N-terminus of the alpha chain.

It carries out the reaction S-adenosyl-L-methionine + H(+) = S-adenosyl 3-(methylsulfanyl)propylamine + CO2. The protein operates within amine and polyamine biosynthesis; S-adenosylmethioninamine biosynthesis; S-adenosylmethioninamine from S-adenosyl-L-methionine: step 1/1. Its function is as follows. Catalyzes the decarboxylation of S-adenosylmethionine to S-adenosylmethioninamine (dcAdoMet), the propylamine donor required for the synthesis of the polyamines spermine and spermidine from the diamine putrescine. The polypeptide is S-adenosylmethionine decarboxylase proenzyme (Pseudomonas paraeruginosa (strain DSM 24068 / PA7) (Pseudomonas aeruginosa (strain PA7))).